Reading from the N-terminus, the 60-residue chain is Cecropin-B type 2 (60 aa).

The N-terminal stretch at 1–24 (MNFSKLFALVLLIGLVLLTGQTEA) is a signal peptide. At isoleucine 58 the chain carries Isoleucine amide.

The protein belongs to the cecropin family.

It localises to the secreted. Functionally, cecropins have lytic and antibacterial activity against several Gram-positive and Gram-negative bacteria. The chain is Cecropin-B type 2 (CECB2) from Aedes albopictus (Asian tiger mosquito).